We begin with the raw amino-acid sequence, 231 residues long: Glycerol-3-phosphate acyltransferase (231 aa).

Helical transmembrane passes span 6–26, 55–75, 95–115, 130–150, 152–172, and 196–216; these read FLFL…LVIG, WGIL…TIFL, LTMK…FSLF, IITS…AIFL, LFGY…IFLW, and LFYF…YSNI.

It belongs to the PlsY family. Probably interacts with PlsX.

It is found in the cell membrane. It catalyses the reaction an acyl phosphate + sn-glycerol 3-phosphate = a 1-acyl-sn-glycero-3-phosphate + phosphate. The protein operates within lipid metabolism; phospholipid metabolism. Catalyzes the transfer of an acyl group from acyl-phosphate (acyl-PO(4)) to glycerol-3-phosphate (G3P) to form lysophosphatidic acid (LPA). This enzyme utilizes acyl-phosphate as fatty acyl donor, but not acyl-CoA or acyl-ACP. The sequence is that of Glycerol-3-phosphate acyltransferase from Aster yellows witches'-broom phytoplasma (strain AYWB).